We begin with the raw amino-acid sequence, 1167 residues long: Non-toxic nonhemagglutinin (1167 aa).

The tract at residues 1–381 (MDIIDNVDIT…PQQIINLIDN (381 aa)) is light chain nLC. The N-heavy chain nHN stretch occupies residues 382-804 (NNILLIKSYI…LFNSKIQLTI (423 aa)). Residues 805–1167 (KNEKPEYNLL…LNDIYSWTLI (363 aa)) form a C-heavy chain nHC region.

It belongs to the botulism non-toxic nonhemagglutinin family.

In terms of biological role, expression of the ptox operon (ntnh-orfX1-orfX2-orfX3-pmp1) in B.thuringiensis kills Anopheles but not Aedes mosquito 3rd instar larvae. The ntnh-pmp1 construct is about half as toxic. The chain is Non-toxic nonhemagglutinin from Paraclostridium bifermentans (Clostridium bifermentans).